A 762-amino-acid polypeptide reads, in one-letter code: Phosphoribosylformylglycinamidine synthase subunit PurL (762 aa).

His58 is a catalytic residue. Residues Tyr61 and Arg105 each contribute to the ATP site. A Mg(2+)-binding site is contributed by Glu107. Substrate-binding positions include 108–111 (SHNH) and Arg130. The active-site Proton acceptor is the His109. Asp131 is a binding site for Mg(2+). Gln255 provides a ligand contact to substrate. Mg(2+) is bound at residue Asp283. A substrate-binding site is contributed by 327 to 329 (ESQ). Positions 513 and 550 each coordinate ATP. Position 551 (Asn551) interacts with Mg(2+). A substrate-binding site is contributed by Ser553.

The protein belongs to the FGAMS family. In terms of assembly, monomer. Part of the FGAM synthase complex composed of 1 PurL, 1 PurQ and 2 PurS subunits.

It localises to the cytoplasm. It carries out the reaction N(2)-formyl-N(1)-(5-phospho-beta-D-ribosyl)glycinamide + L-glutamine + ATP + H2O = 2-formamido-N(1)-(5-O-phospho-beta-D-ribosyl)acetamidine + L-glutamate + ADP + phosphate + H(+). Its pathway is purine metabolism; IMP biosynthesis via de novo pathway; 5-amino-1-(5-phospho-D-ribosyl)imidazole from N(2)-formyl-N(1)-(5-phospho-D-ribosyl)glycinamide: step 1/2. In terms of biological role, part of the phosphoribosylformylglycinamidine synthase complex involved in the purines biosynthetic pathway. Catalyzes the ATP-dependent conversion of formylglycinamide ribonucleotide (FGAR) and glutamine to yield formylglycinamidine ribonucleotide (FGAM) and glutamate. The FGAM synthase complex is composed of three subunits. PurQ produces an ammonia molecule by converting glutamine to glutamate. PurL transfers the ammonia molecule to FGAR to form FGAM in an ATP-dependent manner. PurS interacts with PurQ and PurL and is thought to assist in the transfer of the ammonia molecule from PurQ to PurL. In Corynebacterium glutamicum (strain R), this protein is Phosphoribosylformylglycinamidine synthase subunit PurL.